The sequence spans 189 residues: Isopentenyl-diphosphate Delta-isomerase (189 aa).

Mn(2+) contacts are provided by His27 and His34. One can recognise a Nudix hydrolase domain in the interval 32-171 (PLHFAFSTYI…PFVFSPWLVD (140 aa)). The active site involves Cys69. A Mg(2+)-binding site is contributed by Cys69. His71 serves as a coordination point for Mn(2+). Glu89 contributes to the Mg(2+) binding site. Positions 119 and 121 each coordinate Mn(2+). Residue Glu121 is part of the active site.

This sequence belongs to the IPP isomerase type 1 family. Requires Mg(2+) as cofactor. The cofactor is Mn(2+).

The protein localises to the cytoplasm. It carries out the reaction isopentenyl diphosphate = dimethylallyl diphosphate. Its pathway is isoprenoid biosynthesis; dimethylallyl diphosphate biosynthesis; dimethylallyl diphosphate from isopentenyl diphosphate: step 1/1. Catalyzes the 1,3-allylic rearrangement of the homoallylic substrate isopentenyl (IPP) to its highly electrophilic allylic isomer, dimethylallyl diphosphate (DMAPP). The polypeptide is Isopentenyl-diphosphate Delta-isomerase (Corynebacterium glutamicum (strain ATCC 13032 / DSM 20300 / JCM 1318 / BCRC 11384 / CCUG 27702 / LMG 3730 / NBRC 12168 / NCIMB 10025 / NRRL B-2784 / 534)).